The primary structure comprises 297 residues: Homoserine kinase (297 aa).

Residue 79–89 (PIARGLGSSGA) participates in ATP binding.

Belongs to the GHMP kinase family. Homoserine kinase subfamily.

It localises to the cytoplasm. The catalysed reaction is L-homoserine + ATP = O-phospho-L-homoserine + ADP + H(+). The protein operates within amino-acid biosynthesis; L-threonine biosynthesis; L-threonine from L-aspartate: step 4/5. Its function is as follows. Catalyzes the ATP-dependent phosphorylation of L-homoserine to L-homoserine phosphate. The protein is Homoserine kinase of Pyrobaculum aerophilum (strain ATCC 51768 / DSM 7523 / JCM 9630 / CIP 104966 / NBRC 100827 / IM2).